Here is a 126-residue protein sequence, read N- to C-terminus: Large ribosomal subunit protein bL17 (126 aa).

It belongs to the bacterial ribosomal protein bL17 family. Part of the 50S ribosomal subunit. Contacts protein L32.

This Rickettsia felis (strain ATCC VR-1525 / URRWXCal2) (Rickettsia azadi) protein is Large ribosomal subunit protein bL17.